A 271-amino-acid chain; its full sequence is MLKQRIITALVLLPIALGGFFLLEGAFFALFIGAVVSLGAWEWARLAGYEQQFGRVAYAATVAVLMVALYHLPQLAGAVLLLALVWWTLATVLVLTYPESVGYWGGRWRRLGMGLLILLPAWQGLVLLKQWPLANGLIIAVMVLVWGADIGAYFSGKAFGKRKLAPRVSPGKSWEGVYGGLAASLAITLAVGLYRGWSLGALLLALLGAALVVFVSIVGDLTESMFKRQSGIKDSSNLLPGHGGVLDRIDSLTAAIPVFAALLWAAGWGAP.

The next 8 membrane-spanning stretches (helical) occupy residues 12 to 32 (LLPIALGGFFLLEGAFFALFI), 53 to 73 (FGRVAYAATVAVLMVALYHLP), 75 to 95 (LAGAVLLLALVWWTLATVLVL), 111 to 131 (LGMGLLILLPAWQGLVLLKQW), 136 to 156 (GLIIAVMVLVWGADIGAYFSG), 174 to 194 (WEGVYGGLAASLAITLAVGLY), 199 to 219 (LGALLLALLGAALVVFVSIVG), and 251 to 271 (SLTAAIPVFAALLWAAGWGAP).

This sequence belongs to the CDS family.

Its subcellular location is the cell inner membrane. The catalysed reaction is a 1,2-diacyl-sn-glycero-3-phosphate + CTP + H(+) = a CDP-1,2-diacyl-sn-glycerol + diphosphate. It functions in the pathway phospholipid metabolism; CDP-diacylglycerol biosynthesis; CDP-diacylglycerol from sn-glycerol 3-phosphate: step 3/3. The chain is Phosphatidate cytidylyltransferase (cdsA) from Pseudomonas aeruginosa (strain ATCC 15692 / DSM 22644 / CIP 104116 / JCM 14847 / LMG 12228 / 1C / PRS 101 / PAO1).